A 93-amino-acid chain; its full sequence is Acylphosphatase (93 aa).

Residues lysine 3 to tyrosine 93 form the Acylphosphatase-like domain. Catalysis depends on residues arginine 18 and asparagine 36.

Belongs to the acylphosphatase family.

The enzyme catalyses an acyl phosphate + H2O = a carboxylate + phosphate + H(+). The protein is Acylphosphatase (acyP) of Borrelia garinii subsp. bavariensis (strain ATCC BAA-2496 / DSM 23469 / PBi) (Borreliella bavariensis).